The following is a 521-amino-acid chain: Cell cycle checkpoint protein hpr-9 (521 aa).

Disordered stretches follow at residues 1–20 (MQAI…TRER), 318–375 (QHEE…NRFV), and 492–521 (GTET…YESR). Composition is skewed to polar residues over residues 355–370 (ESLS…SLPS) and 493–504 (TETTSKMRMSQQ).

This sequence belongs to the rad9 family. As to quaternary structure, putative component of the toroidal 9-1-1 (RAD9-RAD1-HUS1) complex, composed of hpr-9, mrt-2 and hus-1.

Functionally, may be a component of the 9-1-1 cell-cycle checkpoint response complex that plays a major role in DNA repair. The protein is Cell cycle checkpoint protein hpr-9 of Caenorhabditis elegans.